A 391-amino-acid chain; its full sequence is UDP-N-acetylglucosamine--N-acetylmuramyl-(pentapeptide) pyrophosphoryl-undecaprenol N-acetylglucosamine transferase (391 aa).

UDP-N-acetyl-alpha-D-glucosamine-binding positions include threonine 11 to glycine 13, arginine 176, serine 206, and glutamine 312.

It belongs to the glycosyltransferase 28 family. MurG subfamily.

The protein localises to the cell inner membrane. It carries out the reaction di-trans,octa-cis-undecaprenyl diphospho-N-acetyl-alpha-D-muramoyl-L-alanyl-D-glutamyl-meso-2,6-diaminopimeloyl-D-alanyl-D-alanine + UDP-N-acetyl-alpha-D-glucosamine = di-trans,octa-cis-undecaprenyl diphospho-[N-acetyl-alpha-D-glucosaminyl-(1-&gt;4)]-N-acetyl-alpha-D-muramoyl-L-alanyl-D-glutamyl-meso-2,6-diaminopimeloyl-D-alanyl-D-alanine + UDP + H(+). It functions in the pathway cell wall biogenesis; peptidoglycan biosynthesis. Its function is as follows. Cell wall formation. Catalyzes the transfer of a GlcNAc subunit on undecaprenyl-pyrophosphoryl-MurNAc-pentapeptide (lipid intermediate I) to form undecaprenyl-pyrophosphoryl-MurNAc-(pentapeptide)GlcNAc (lipid intermediate II). This chain is UDP-N-acetylglucosamine--N-acetylmuramyl-(pentapeptide) pyrophosphoryl-undecaprenol N-acetylglucosamine transferase, found in Treponema denticola (strain ATCC 35405 / DSM 14222 / CIP 103919 / JCM 8153 / KCTC 15104).